Reading from the N-terminus, the 212-residue chain is HTH-type transcriptional regulatory protein RaaS (212 aa).

One can recognise an HTH tetR-type domain in the interval 6 to 65; sequence LTAHARIREAAIEQFGRHGFGVGLRAIAEAAGVSAALVIHHFGSKEGLRKACDDFVAEEI. The segment at residues 28-47 is a DNA-binding region (H-T-H motif); sequence GLRAIAEAAGVSAALVIHHF.

Homodimer. Interacts with long chain acyl-CoA derivatives. Interacts with several drugs such rhodamine 6G, ethidium and safranin O.

With respect to regulation, interaction with long chain acyl-CoA derivatives (oleoyl-CoA and, to lesser extent, stearoyl-CoA) prevents binding to DNA, leading to the expression of the target genes. Long chain acyl-CoA derivatives may serve as biological indicators of the bacterial metabolic state. Regulates the expression of the Rv1217c-Rv1218c multidrug efflux system and its own expression. Acts by binding to promoter regions of Rv1219c and upstream of the Rv1218c gene. Important for survival in prolonged stationary phase and during macrophage infection. May be used to eliminate non-growing mycobacteria. The chain is HTH-type transcriptional regulatory protein RaaS from Mycobacterium tuberculosis (strain ATCC 25618 / H37Rv).